Here is a 391-residue protein sequence, read N- to C-terminus: Carbamoyl phosphate synthase small chain (391 aa).

Positions 1-199 (MVRISGFCCA…TWEFIEGPTT (199 aa)) are CPSase. The L-glutamine site is built by S61, G251, and G253. The Glutamine amidotransferase type-1 domain maps to 203–388 (TVVAIDFGVK…VALMRDRQPT (186 aa)). The active-site Nucleophile is the C279. Residues L280, Q283, N319, G321, and F322 each coordinate L-glutamine. Catalysis depends on residues H361 and E363.

Belongs to the CarA family. Composed of two chains; the small (or glutamine) chain promotes the hydrolysis of glutamine to ammonia, which is used by the large (or ammonia) chain to synthesize carbamoyl phosphate. Tetramer of heterodimers (alpha,beta)4.

It carries out the reaction hydrogencarbonate + L-glutamine + 2 ATP + H2O = carbamoyl phosphate + L-glutamate + 2 ADP + phosphate + 2 H(+). It catalyses the reaction L-glutamine + H2O = L-glutamate + NH4(+). Its pathway is amino-acid biosynthesis; L-arginine biosynthesis; carbamoyl phosphate from bicarbonate: step 1/1. The protein operates within pyrimidine metabolism; UMP biosynthesis via de novo pathway; (S)-dihydroorotate from bicarbonate: step 1/3. In terms of biological role, small subunit of the glutamine-dependent carbamoyl phosphate synthetase (CPSase). CPSase catalyzes the formation of carbamoyl phosphate from the ammonia moiety of glutamine, carbonate, and phosphate donated by ATP, constituting the first step of 2 biosynthetic pathways, one leading to arginine and/or urea and the other to pyrimidine nucleotides. The small subunit (glutamine amidotransferase) binds and cleaves glutamine to supply the large subunit with the substrate ammonia. This Synechococcus sp. (strain ATCC 27144 / PCC 6301 / SAUG 1402/1) (Anacystis nidulans) protein is Carbamoyl phosphate synthase small chain.